A 305-amino-acid chain; its full sequence is Foldase protein PrsA (305 aa).

The first 19 residues, 1–19 (MKKWFIALAGLLLTVTLAG), serve as a signal peptide directing secretion. A lipid anchor (N-palmitoyl cysteine) is attached at Cys20. Cys20 carries the S-diacylglycerol cysteine lipid modification. One can recognise a PpiC domain in the interval 136-235 (EPEVSVAHIL…YGYHVILMLK (100 aa)).

The protein belongs to the PrsA family.

It is found in the cell membrane. The catalysed reaction is [protein]-peptidylproline (omega=180) = [protein]-peptidylproline (omega=0). Plays a major role in protein secretion by helping the post-translocational extracellular folding of several secreted proteins. The sequence is that of Foldase protein PrsA from Levilactobacillus brevis (strain ATCC 367 / BCRC 12310 / CIP 105137 / JCM 1170 / LMG 11437 / NCIMB 947 / NCTC 947) (Lactobacillus brevis).